Here is a 237-residue protein sequence, read N- to C-terminus: Proteasome subunit beta (237 aa).

The disordered stretch occupies residues 1–27 (MSKFPDLPGMKNLDANPYEPELASFDD). A propeptide spans 1-42 (MSKFPDLPGMKNLDANPYEPELASFDDMDADAGDGDAVAKTG) (removed in mature form; by autocatalysis). The Nucleophile role is filled by threonine 43.

Belongs to the peptidase T1B family. As to quaternary structure, the 20S proteasome core is composed of 14 alpha and 14 beta subunits that assemble into four stacked heptameric rings, resulting in a barrel-shaped structure. The two inner rings, each composed of seven catalytic beta subunits, are sandwiched by two outer rings, each composed of seven alpha subunits. The catalytic chamber with the active sites is on the inside of the barrel. Has a gated structure, the ends of the cylinder being occluded by the N-termini of the alpha-subunits. Is capped at one or both ends by the proteasome regulatory ATPase, PAN.

Its subcellular location is the cytoplasm. It catalyses the reaction Cleavage of peptide bonds with very broad specificity.. Its activity is regulated as follows. The formation of the proteasomal ATPase PAN-20S proteasome complex, via the docking of the C-termini of PAN into the intersubunit pockets in the alpha-rings, triggers opening of the gate for substrate entry. Interconversion between the open-gate and close-gate conformations leads to a dynamic regulation of the 20S proteasome proteolysis activity. Its function is as follows. Component of the proteasome core, a large protease complex with broad specificity involved in protein degradation. This chain is Proteasome subunit beta, found in Halomicrobium mukohataei (strain ATCC 700874 / DSM 12286 / JCM 9738 / NCIMB 13541) (Haloarcula mukohataei).